Here is a 1019-residue protein sequence, read N- to C-terminus: Antigenic heat-stable 120 kDa protein (1019 aa).

The disordered stretch occupies residues 1 to 33; that stretch reads MSKNDNQDISEFDPLNREFTEAEKQQQMQQEQE. Residues 14 to 24 show a composition bias toward basic and acidic residues; the sequence is PLNREFTEAEK.

It is found in the cytoplasm. The protein is Antigenic heat-stable 120 kDa protein (sca4) of Rickettsia typhi (strain ATCC VR-144 / Wilmington).